Here is a 435-residue protein sequence, read N- to C-terminus: MVDHSAALFNKAQNYMPGGVNSPVRAFGAVGGVPRFIKKASGPYLIDVDEKKYIDYVGSWGPMILGHAHPAVIQAAQEAVQNGLSFGAPCENEIKLAALIGEFMPSIEKVRMVNSGTEATMSALRLARGVTGRSKIIKFEGCYHGHADCLLVNAGSGALTFGMPSSPGVPLGTVQDTLTATFNDLDSVAALFEKYSKDIAAIIVEPIAGNMNLIPAAPDFLTGLRELCNQYGSLLIFDEVITGFRVAKGGAQSLYNIRPDLTALGKIIGGGMPVGAYGGRREIMNQLSPEGPVYQAGTLSGNPVAMAAGLATLKELTAENFYSNLKEKTERLVMGILSRAKAAKIPLTANFSCGIFGLIFTSEERVTRYAQAVNGNVEHFRSFFHKMLDNGVYLAPSAFESGFISAAHTNKEVDKTLDIIENIFSVSETYLRISV.

Lys266 carries the N6-(pyridoxal phosphate)lysine modification.

Belongs to the class-III pyridoxal-phosphate-dependent aminotransferase family. HemL subfamily. As to quaternary structure, homodimer. It depends on pyridoxal 5'-phosphate as a cofactor.

The protein localises to the cytoplasm. It carries out the reaction (S)-4-amino-5-oxopentanoate = 5-aminolevulinate. It functions in the pathway porphyrin-containing compound metabolism; protoporphyrin-IX biosynthesis; 5-aminolevulinate from L-glutamyl-tRNA(Glu): step 2/2. This chain is Glutamate-1-semialdehyde 2,1-aminomutase, found in Coxiella burnetii (strain CbuK_Q154) (Coxiella burnetii (strain Q154)).